A 166-amino-acid polypeptide reads, in one-letter code: Small ribosomal subunit protein uS5 (166 aa).

The region spanning 11–74 is the S5 DRBM domain; the sequence is FLEKLIAVNR…EKARRNMVDV (64 aa).

It belongs to the universal ribosomal protein uS5 family. As to quaternary structure, part of the 30S ribosomal subunit. Contacts proteins S4 and S8.

In terms of biological role, with S4 and S12 plays an important role in translational accuracy. Functionally, located at the back of the 30S subunit body where it stabilizes the conformation of the head with respect to the body. This Alteromonas mediterranea (strain DSM 17117 / CIP 110805 / LMG 28347 / Deep ecotype) protein is Small ribosomal subunit protein uS5.